The primary structure comprises 246 residues: 4-hydroxy-tetrahydrodipicolinate reductase (246 aa).

NAD(+) contacts are provided by residues 8-13 (GALGRM), D34, 74-76 (GTT), and 101-104 (APNF). H131 functions as the Proton donor/acceptor in the catalytic mechanism. A (S)-2,3,4,5-tetrahydrodipicolinate-binding site is contributed by H132. Residue K135 is the Proton donor of the active site. 141–142 (GT) contacts (S)-2,3,4,5-tetrahydrodipicolinate.

This sequence belongs to the DapB family.

The protein localises to the cytoplasm. The enzyme catalyses (S)-2,3,4,5-tetrahydrodipicolinate + NAD(+) + H2O = (2S,4S)-4-hydroxy-2,3,4,5-tetrahydrodipicolinate + NADH + H(+). The catalysed reaction is (S)-2,3,4,5-tetrahydrodipicolinate + NADP(+) + H2O = (2S,4S)-4-hydroxy-2,3,4,5-tetrahydrodipicolinate + NADPH + H(+). The protein operates within amino-acid biosynthesis; L-lysine biosynthesis via DAP pathway; (S)-tetrahydrodipicolinate from L-aspartate: step 4/4. Catalyzes the conversion of 4-hydroxy-tetrahydrodipicolinate (HTPA) to tetrahydrodipicolinate. The sequence is that of 4-hydroxy-tetrahydrodipicolinate reductase from Thermobifida fusca (strain YX).